The chain runs to 896 residues: Alanine--tRNA ligase (896 aa).

Residues His581, His585, Cys684, and His688 each coordinate Zn(2+).

This sequence belongs to the class-II aminoacyl-tRNA synthetase family. Requires Zn(2+) as cofactor.

The protein localises to the cytoplasm. The enzyme catalyses tRNA(Ala) + L-alanine + ATP = L-alanyl-tRNA(Ala) + AMP + diphosphate. Its function is as follows. Catalyzes the attachment of alanine to tRNA(Ala) in a two-step reaction: alanine is first activated by ATP to form Ala-AMP and then transferred to the acceptor end of tRNA(Ala). Also edits incorrectly charged Ser-tRNA(Ala) and Gly-tRNA(Ala) via its editing domain. This Renibacterium salmoninarum (strain ATCC 33209 / DSM 20767 / JCM 11484 / NBRC 15589 / NCIMB 2235) protein is Alanine--tRNA ligase.